We begin with the raw amino-acid sequence, 673 residues long: DNA ligase (673 aa).

Residues 34–38, 83–84, and Glu-116 each bind NAD(+); these read DAEYD and SL. The N6-AMP-lysine intermediate role is filled by Lys-118. The NAD(+) site is built by Arg-139, Glu-176, Lys-293, and Lys-317. Positions 411, 414, 429, and 435 each coordinate Zn(2+). Residues 595–673 enclose the BRCT domain; that stretch reads NQQNPFFGKT…EDEFLKWVNS (79 aa).

Belongs to the NAD-dependent DNA ligase family. LigA subfamily. It depends on Mg(2+) as a cofactor. Mn(2+) serves as cofactor.

The catalysed reaction is NAD(+) + (deoxyribonucleotide)n-3'-hydroxyl + 5'-phospho-(deoxyribonucleotide)m = (deoxyribonucleotide)n+m + AMP + beta-nicotinamide D-nucleotide.. Its function is as follows. DNA ligase that catalyzes the formation of phosphodiester linkages between 5'-phosphoryl and 3'-hydroxyl groups in double-stranded DNA using NAD as a coenzyme and as the energy source for the reaction. It is essential for DNA replication and repair of damaged DNA. The polypeptide is DNA ligase (Legionella pneumophila (strain Paris)).